Here is a 216-residue protein sequence, read N- to C-terminus: Phosphatidylserine decarboxylase proenzyme (216 aa).

Ser182 (schiff-base intermediate with substrate; via pyruvic acid) is an active-site residue. Ser182 carries the pyruvic acid (Ser); by autocatalysis modification.

It belongs to the phosphatidylserine decarboxylase family. PSD-A subfamily. In terms of assembly, heterodimer of a large membrane-associated beta subunit and a small pyruvoyl-containing alpha subunit. Requires pyruvate as cofactor. Post-translationally, is synthesized initially as an inactive proenzyme. Formation of the active enzyme involves a self-maturation process in which the active site pyruvoyl group is generated from an internal serine residue via an autocatalytic post-translational modification. Two non-identical subunits are generated from the proenzyme in this reaction, and the pyruvate is formed at the N-terminus of the alpha chain, which is derived from the carboxyl end of the proenzyme. The post-translation cleavage follows an unusual pathway, termed non-hydrolytic serinolysis, in which the side chain hydroxyl group of the serine supplies its oxygen atom to form the C-terminus of the beta chain, while the remainder of the serine residue undergoes an oxidative deamination to produce ammonia and the pyruvoyl prosthetic group on the alpha chain.

The protein localises to the cell membrane. It catalyses the reaction a 1,2-diacyl-sn-glycero-3-phospho-L-serine + H(+) = a 1,2-diacyl-sn-glycero-3-phosphoethanolamine + CO2. Its pathway is phospholipid metabolism; phosphatidylethanolamine biosynthesis; phosphatidylethanolamine from CDP-diacylglycerol: step 2/2. In terms of biological role, catalyzes the formation of phosphatidylethanolamine (PtdEtn) from phosphatidylserine (PtdSer). The protein is Phosphatidylserine decarboxylase proenzyme of Burkholderia mallei (strain NCTC 10247).